We begin with the raw amino-acid sequence, 83 residues long: Mu-theraphotoxin-Hhn2j 1 (83 aa).

Residues M1–A21 form the signal peptide. Residues S22–R48 constitute a propeptide that is removed on maturation. 3 cysteine pairs are disulfide-bonded: C50-C65, C57-C70, and C64-C77. At L81 the chain carries Leucine amide.

The protein belongs to the neurotoxin 10 (Hwtx-1) family. 15 (Hntx-3) subfamily. As to quaternary structure, monomer. As to expression, expressed by the venom gland.

It is found in the secreted. In terms of biological role, lethal neurotoxin. Selectively blocks tetrodotoxin-sensitive voltage-gated sodium channels (Nav). Does not affect tetrodotoxin-resistant voltage-gated sodium channels or calcium channels. The polypeptide is Mu-theraphotoxin-Hhn2j 1 (Cyriopagopus hainanus (Chinese bird spider)).